Reading from the N-terminus, the 624-residue chain is (-)-beta-phellandrene synthase 3, chloroplastic (624 aa).

A chloroplast-targeting transit peptide spans 1–48 (MAIVSSVPLASKSCLHKSLISSIHKLKPFCRTIPTLGMSRPGKYVMPS). Residues Asp375, Asp379, and Asp527 each contribute to the Mg(2+) site. Residues 375-379 (DDMYD) carry the DDXXD motif motif.

It belongs to the terpene synthase family. Tpsd subfamily. The cofactor is Mg(2+). Mn(2+) serves as cofactor.

The protein localises to the plastid. It localises to the chloroplast. The enzyme catalyses (2E)-geranyl diphosphate = (-)-beta-phellandrene + diphosphate. It participates in terpene metabolism; oleoresin biosynthesis. Terpene synthase (TPS) involved in the biosynthesis of monoterpene natural products included in conifer oleoresin secretions and volatile emissions; these compounds contribute to biotic and abiotic stress defense against herbivores and pathogens. Catalyzes the conversion of (2E)-geranyl diphosphate (GPP) to (-)-beta-phellandrene. This is (-)-beta-phellandrene synthase 3, chloroplastic from Picea sitchensis (Sitka spruce).